We begin with the raw amino-acid sequence, 176 residues long: Endoribonuclease YbeY (176 aa).

Residues histidine 128, histidine 132, and histidine 138 each contribute to the Zn(2+) site.

The protein belongs to the endoribonuclease YbeY family. Zn(2+) serves as cofactor.

It is found in the cytoplasm. Its function is as follows. Single strand-specific metallo-endoribonuclease involved in late-stage 70S ribosome quality control and in maturation of the 3' terminus of the 16S rRNA. The polypeptide is Endoribonuclease YbeY (Zymomonas mobilis subsp. mobilis (strain ATCC 31821 / ZM4 / CP4)).